Here is a 438-residue protein sequence, read N- to C-terminus: V-type ATP synthase beta chain (438 aa).

It belongs to the ATPase alpha/beta chains family.

In terms of biological role, produces ATP from ADP in the presence of a proton gradient across the membrane. The V-type beta chain is a regulatory subunit. This chain is V-type ATP synthase beta chain (atpB), found in Chlamydia pneumoniae (Chlamydophila pneumoniae).